The following is a 48-amino-acid chain: uncharacterized protein (48 aa).

Residues 20-37 traverse the membrane as a helical segment; it reads ILASPLFFANYVLHAAIH.

The protein resides in the membrane. This is an uncharacterized protein from Saccharomyces cerevisiae (strain ATCC 204508 / S288c) (Baker's yeast).